The sequence spans 269 residues: Aegyptin-like protein (269 aa).

Positions 1–19 are cleaved as a signal peptide; the sequence is MKLLLLLASVLCLALIVSA. Residues 19-152 are disordered; that stretch reads ARPSDETTDQ…GGAEGGEESP (134 aa). The interval 38-148 is GE-rich region which mediates binding of Ca(2+); it reads TSDSYHQEED…AGEEGGAEGG (111 aa). 3 stretches are compositionally biased toward acidic residues: residues 56–73, 98–121, and 131–149; these read GTED…ESSS, GEED…EGGA, and GGAD…EGGE. The tract at residues 148–269 is mediates binding of host collagen and inhibition of platelet aggregation; the sequence is GEESPVNTYH…DCIVEKRDSE (122 aa). 2 disulfide bridges follow: Cys208–Cys261 and Cys230–Cys239.

This sequence belongs to the aegyptin family. In terms of tissue distribution, female saliva (at protein level). Distal lateral lobes of female salivary gland (at protein level). Low-level expression in male salivary gland. Not detected in female and male carcasses.

The protein localises to the secreted. Its function is as follows. Modulates blood feeding of female mosquitoes on vertebrate hosts. Inhibits collagen-induced platelet aggregation in the host via preventing collagen interaction with its ligands: glycoprotein VI and integrin alpha-2/beta-1 (ITGA2/ITGB1). Inhibits collagen-induced increase of Ca(2+) levels in host platelets. Binds to host collagens. Binds Ca(2+). Prevents a decrease in platelet count in the host blood after collagen injection. Functionally, (Microbial infection) Does not affect the development of Plasmodium berghei parasites in mosquitoes. This is Aegyptin-like protein from Anopheles stephensi (Indo-Pakistan malaria mosquito).